The chain runs to 330 residues: Ketol-acid reductoisomerase (NADP(+)) (330 aa).

A KARI N-terminal Rossmann domain is found at 3-184 (LPVYYDKDID…GGGRMGVLET (182 aa)). Residues 26–29 (YGVQ), Ser-52, and Ser-54 each bind NADP(+). His-109 is a catalytic residue. Gly-135 contributes to the NADP(+) binding site. Positions 185–329 (SFKEECESDL…EILRAPFNHK (145 aa)) constitute a KARI C-terminal knotted domain. The Mg(2+) site is built by Asp-193, Glu-197, Glu-229, and Glu-233. Residue Ser-254 coordinates substrate.

The protein belongs to the ketol-acid reductoisomerase family. The cofactor is Mg(2+).

It catalyses the reaction (2R)-2,3-dihydroxy-3-methylbutanoate + NADP(+) = (2S)-2-acetolactate + NADPH + H(+). It carries out the reaction (2R,3R)-2,3-dihydroxy-3-methylpentanoate + NADP(+) = (S)-2-ethyl-2-hydroxy-3-oxobutanoate + NADPH + H(+). Its pathway is amino-acid biosynthesis; L-isoleucine biosynthesis; L-isoleucine from 2-oxobutanoate: step 2/4. It functions in the pathway amino-acid biosynthesis; L-valine biosynthesis; L-valine from pyruvate: step 2/4. Involved in the biosynthesis of branched-chain amino acids (BCAA). Catalyzes an alkyl-migration followed by a ketol-acid reduction of (S)-2-acetolactate (S2AL) to yield (R)-2,3-dihydroxy-isovalerate. In the isomerase reaction, S2AL is rearranged via a Mg-dependent methyl migration to produce 3-hydroxy-3-methyl-2-ketobutyrate (HMKB). In the reductase reaction, this 2-ketoacid undergoes a metal-dependent reduction by NADPH to yield (R)-2,3-dihydroxy-isovalerate. In Helicobacter pylori (strain J99 / ATCC 700824) (Campylobacter pylori J99), this protein is Ketol-acid reductoisomerase (NADP(+)).